A 297-amino-acid polypeptide reads, in one-letter code: MFNSNVKLGIAPIAWTNDDMPDLGKENTFEQCISEMALAGFKGSEVGNKYPRDVEVLKKALELRDMEIASAWFSAFLTTKPYEETEKAFIEHRDFLNAMGAKVIVVSEQGHSIQGQMETPIFDGKYVLNEEEWKTLAEGLNKLGALAKEKGMKLVYHHHMGTVVQTTEEIDKLMDLTDENLVYLLFDSGHLVYSGEDALEVLKKYVNRVKHVHLKDIRKKKVEEVKRDKLSFLQGVRKGAFTVPGDGDIDFEPIFKVLDDNNYEGYLLVEAEQDPAIANPLEYAIKARKYIKEKTNL.

This sequence belongs to the IolE/MocC family. Glutathione serves as cofactor. Requires Co(2+) as cofactor. The cofactor is Mn(2+).

The enzyme catalyses scyllo-inosose = 3D-3,5/4-trihydroxycyclohexane-1,2-dione + H2O. Its pathway is polyol metabolism; myo-inositol degradation into acetyl-CoA; acetyl-CoA from myo-inositol: step 2/7. Functionally, catalyzes the dehydration of inosose (2-keto-myo-inositol, 2KMI or 2,4,6/3,5-pentahydroxycyclohexanone) to 3D-(3,5/4)-trihydroxycyclohexane-1,2-dione (D-2,3-diketo-4-deoxy-epi-inositol). This Clostridium perfringens (strain 13 / Type A) protein is Inosose dehydratase.